We begin with the raw amino-acid sequence, 462 residues long: Elongation factor 1-alpha 1 (462 aa).

Residue G2 is modified to N,N,N-trimethylglycine. The tr-type G domain occupies 5-242; it reads KTHINIVVIG…DCILPPTRPT (238 aa). The tract at residues 14-21 is G1; it reads GHVDSGKS. 14-21 provides a ligand contact to GTP; the sequence is GHVDSGKS. Residue K36 is modified to N6,N6,N6-trimethyllysine; alternate. Residue K36 is modified to N6,N6-dimethyllysine; alternate. Position 36 is an N6-methyllysine; alternate (K36). Position 55 is an N6,N6-dimethyllysine (K55). The G2 stretch occupies residues 70–74; the sequence is GITID. An N6,N6,N6-trimethyllysine; by EEF1AKMT1 modification is found at K79. Residues 91 to 94 are G3; that stretch reads DAPG. 153–156 is a binding site for GTP; it reads NKMD. The interval 153-156 is G4; the sequence is NKMD. N6,N6,N6-trimethyllysine; alternate; by EEF1AKMT3 is present on K165. An N6,N6-dimethyllysine; alternate; by EEF1AKMT3 modification is found at K165. K165 carries the N6-acetyllysine; alternate modification. N6-methyllysine; alternate; by EEF1AKMT3 is present on K165. The residue at position 172 (K172) is an N6-acetyllysine. 194-196 contacts GTP; sequence SGW. The G5 stretch occupies residues 194-196; sequence SGW. K273 carries the N6-acetyllysine modification. At S300 the chain carries Phosphoserine; by TGFBR1. Residue E301 is modified to 5-glutamyl glycerylphosphorylethanolamine. The residue at position 318 (K318) is an N6,N6,N6-trimethyllysine; by EEF1AKMT2. 5-glutamyl glycerylphosphorylethanolamine is present on E374. A Glycyl lysine isopeptide (Lys-Gly) (interchain with G-Cter in ubiquitin) cross-link involves residue K385. K392 bears the N6-acetyllysine; alternate mark. The residue at position 392 (K392) is an N6-succinyllysine; alternate. Position 432 is a phosphothreonine; by PASK (T432). K439 carries the N6-acetyllysine modification.

The protein belongs to the TRAFAC class translation factor GTPase superfamily. Classic translation factor GTPase family. EF-Tu/EF-1A subfamily. As to quaternary structure, found in a nuclear export complex with XPO5, EEF1A1, Ran and aminoacylated tRNA. Interacts with PARP1 and TXK. Interacts with KARS1. May interact with ERGIC2. Interacts with IFIT1 (via TPR repeats 4-7). Interacts with DLC1, facilitating distribution to the membrane periphery and ruffles upon growth factor stimulation. Interacts with ZPR1; the interaction occurs in a epidermal growth factor (EGF)-dependent manner. Interacts with PPP1R16B. Interacts with SPHK1 and SPHK2; both interactions increase SPHK1 and SPHK2 kinase activity. Interacts with guanyl-nucleotide exchange factor EEF1B2. Interacts (via middle-region) with HTATIP2 (via N-terminus); the interaction is direct and competes with EEF1A1 binding to guanyl-nucleotide exchange factor EEF1B2, thereby inhibiting GDP for GTP exchange and reactivation of EEF1A1. Interacts with tRNA. ISGylated. In terms of processing, phosphorylated by TXK. Phosphorylation by PASK increases translation efficiency. Phosphorylated by ROCK2. Phosphorylation by TGFBR1 inhibits translation elongation. Post-translationally, trimethylated at Lys-79 by EEF1AKMT1. Methylated at Lys-165 by EEF1AKMT3, methylation by EEF1AKMT3 is dynamic as well as inducible by stress conditions, such as ER-stress, and plays a regulatory role on mRNA translation. Trimethylated at Lys-318 by EEF1AKMT2. Mono-, di-, and trimethylated at Lys-36 by EEF1AKMT4; trimethylated form is predominant. Methylation by EEF1AKMT4 contributes to the fine-tuning of translation rates for a subset of tRNAs. Trimethylated at Gly-2 by METTL13. Mono- and dimethylated at Lys-55 by METTL13; dimethylated form is predominant. Ubiquitinated at Lys-385 by RNF14 in response to ribosome collisions (ribosome stalling), leading to its degradation by the proteasome and rescue of stalled ribosomes.

The protein resides in the cytoplasm. Its subcellular location is the nucleus. It is found in the nucleolus. It localises to the cell membrane. It carries out the reaction GTP + H2O = GDP + phosphate + H(+). Translation elongation factor that catalyzes the GTP-dependent binding of aminoacyl-tRNA (aa-tRNA) to the A-site of ribosomes during the elongation phase of protein synthesis. Base pairing between the mRNA codon and the aa-tRNA anticodon promotes GTP hydrolysis, releasing the aa-tRNA from EEF1A1 and allowing its accommodation into the ribosome. The growing protein chain is subsequently transferred from the P-site peptidyl tRNA to the A-site aa-tRNA, extending it by one amino acid through ribosome-catalyzed peptide bond formation. Also plays a role in the positive regulation of IFNG transcription in T-helper 1 cells as part of an IFNG promoter-binding complex with TXK and PARP1. Also plays a role in cytoskeleton organization by promoting actin bundling. The sequence is that of Elongation factor 1-alpha 1 (EEF1A1) from Cricetulus griseus (Chinese hamster).